The primary structure comprises 568 residues: Sulfate adenylyltransferase (568 aa).

The tract at residues 1–162 (MANSPHGGVL…IEAVNKLNHY (162 aa)) is N-terminal. Positions 163–388 (DYVALRYSPA…LRESSPPRAT (226 aa)) are catalytic. Sulfate is bound at residue Gln-190. ATP is bound by residues 190–193 (QTRN) and 284–287 (GRDH). Residues Thr-191, Arg-192, and Asn-193 contribute to the active site. Arg-192 lines the sulfate pocket. Ala-288 provides a ligand contact to sulfate. An ATP-binding site is contributed by Val-326. The tract at residues 389 to 568 (QGFTIFLTGY…LESEGYFDRL (180 aa)) is allosteric regulation domain; adenylyl-sulfate kinase-like. Residues 428 to 431 (DTVR), Arg-445, 471 to 472 (IA), and Arg-510 each bind 3'-phosphoadenylyl sulfate.

It in the N-terminal section; belongs to the sulfate adenylyltransferase family. This sequence in the C-terminal section; belongs to the APS kinase family. Homohexamer. Dimer of trimers.

Its subcellular location is the cytoplasm. The catalysed reaction is sulfate + ATP + H(+) = adenosine 5'-phosphosulfate + diphosphate. The protein operates within sulfur metabolism; hydrogen sulfide biosynthesis; sulfite from sulfate: step 1/3. Allosterically inhibited by 3'-phosphoadenosine 5'-phosphosulfate (PAPS). Catalyzes the first intracellular reaction of sulfate assimilation, forming adenosine-5'-phosphosulfate (APS) from inorganic sulfate and ATP. Plays an important role in sulfate activation as a component of the biosynthesis pathway of sulfur-containing amino acids. This is Sulfate adenylyltransferase from Aspergillus terreus.